A 309-amino-acid polypeptide reads, in one-letter code: MERALGVGIGPLAAGTVGLLILLKVIQRLRRRPNIQDKVVVITGASSGLGKECARVFHAAGARLILCGRDQRRLQEVVEELGNKTYGKTKTYTPCTVTFDLSNTSVVCSAAAEILKRHGHVDVLINIAGVSYRGNILDTHVSVQREVMETNYFGPVALTQAILPSMVDRGSGHIVVISSVQGKISIPYRSAYAASKHAMQAYYDCLRAEVDSLGLHVSVLSPGYVRTNMSINAVTGDGSKYGVMDRTTATGADPVDVAKDILKAVCQKKKDVVMAGLGPTTAIYLRTLWPALYFRVMASRARKQTGKEE.

The Cytoplasmic portion of the chain corresponds to 1–5; the sequence is MERAL. Residues 6-26 traverse the membrane as a helical; Signal-anchor for type II membrane protein segment; that stretch reads GVGIGPLAAGTVGLLILLKVI. The Lumenal portion of the chain corresponds to 27-271; the sequence is QRLRRRPNIQ…LKAVCQKKKD (245 aa). S47 and L49 together coordinate NAD(+). S179 serves as a coordination point for substrate. Residues Y192, K196, and T227 each coordinate NAD(+). The active-site Proton acceptor is the Y192.

Belongs to the short-chain dehydrogenases/reductases (SDR) family.

Its subcellular location is the endoplasmic reticulum membrane. Functionally, putative oxidoreductase. This chain is Dehydrogenase/reductase SDR family member 7B (dhrs7b), found in Danio rerio (Zebrafish).